Here is a 125-residue protein sequence, read N- to C-terminus: Oxytocin-neurophysin 1 (125 aa).

Positions 1 to 19 (MACPSLACCLLGLLALTSA) are cleaved as a signal peptide. Cys20 and Cys25 are oxidised to a cystine. Position 28 is a glycine amide (Gly28). Intrachain disulfides connect Cys41/Cys85, Cys44/Cys58, Cys52/Cys75, Cys59/Cys65, Cys92/Cys104, Cys98/Cys116, and Cys105/Cys110.

The protein belongs to the vasopressin/oxytocin family. In terms of assembly, interacts with oxytocin receptor (Ki=1.5 nM). Interacts with vasopressin V1aR/AVPR1A (Ki=37 nM), V1bR/AVPR1B (Ki=222 nM), and V2R/AVPR2 receptors (Ki=823 nM).

Neurophysin 1 specifically binds oxytocin. Its function is as follows. Oxytocin causes contraction of the smooth muscle of the uterus and of the mammary gland. Acts by binding to oxytocin receptor (OXTR). The sequence is that of Oxytocin-neurophysin 1 (Oxt) from Rattus norvegicus (Rat).